The chain runs to 508 residues: GMP synthase [glutamine-hydrolyzing] (508 aa).

The Glutamine amidotransferase type-1 domain occupies 1–189 (MILVLDFGSQ…ALLVCGCEKT (189 aa)). C78 acts as the Nucleophile in catalysis. Residues H163 and E165 contribute to the active site. Residues 190-383 (WGMQHFAQRE…LGVSQDFLMR (194 aa)) form the GMPS ATP-PPase domain. 217–223 (SGGVDST) provides a ligand contact to ATP.

Homodimer.

The catalysed reaction is XMP + L-glutamine + ATP + H2O = GMP + L-glutamate + AMP + diphosphate + 2 H(+). The protein operates within purine metabolism; GMP biosynthesis; GMP from XMP (L-Gln route): step 1/1. Functionally, catalyzes the synthesis of GMP from XMP. This Helicobacter pylori (strain P12) protein is GMP synthase [glutamine-hydrolyzing].